The sequence spans 125 residues: Prefoldin subunit beta (125 aa).

It belongs to the prefoldin subunit beta family. As to quaternary structure, heterohexamer of two alpha and four beta subunits.

It is found in the cytoplasm. Its function is as follows. Molecular chaperone capable of stabilizing a range of proteins. Seems to fulfill an ATP-independent, HSP70-like function in archaeal de novo protein folding. This Halobacterium salinarum (strain ATCC 29341 / DSM 671 / R1) protein is Prefoldin subunit beta.